The primary structure comprises 308 residues: Cysteine synthase (308 aa).

At Lys-45 the chain carries N6-(pyridoxal phosphate)lysine. Pyridoxal 5'-phosphate-binding positions include Asn-75, 179-183 (GTGGT), and Ser-267.

Belongs to the cysteine synthase/cystathionine beta-synthase family. Homodimer. Forms CymR(2):CysK(2) or CymR(4):CysK(4) complexes in the absence of O-acetylserine. The cofactor is pyridoxal 5'-phosphate.

The catalysed reaction is O-acetyl-L-serine + hydrogen sulfide = L-cysteine + acetate. It functions in the pathway amino-acid biosynthesis; L-cysteine biosynthesis; L-cysteine from L-serine: step 2/2. In terms of biological role, catalyzes the conversion of O-acetylserine to cysteine. Also acts as a sensor of cysteine availability in the signal transduction pathway modulating CymR activity. When cysteine is present, the pool of O-acetylserine (OAS) is low, which leads to the formation of a CymR-CysK complex and transcriptional repression of the CymR regulon occurs. In the absence of cysteine, the OAS pool is high and the CymR-CysK complex is mostly dissociated, leading to a faster dissociation of CymR from its DNA targets and the lifting of CymR-dependent repression. In Bacillus subtilis (strain 168), this protein is Cysteine synthase (cysK).